The primary structure comprises 120 residues: Large ribosomal subunit protein bL12 (120 aa).

This sequence belongs to the bacterial ribosomal protein bL12 family. In terms of assembly, homodimer. Part of the ribosomal stalk of the 50S ribosomal subunit. Forms a multimeric L10(L12)X complex, where L10 forms an elongated spine to which 2 to 4 L12 dimers bind in a sequential fashion. Binds GTP-bound translation factors.

Forms part of the ribosomal stalk which helps the ribosome interact with GTP-bound translation factors. Is thus essential for accurate translation. The sequence is that of Large ribosomal subunit protein bL12 from Listeria monocytogenes serovar 1/2a (strain ATCC BAA-679 / EGD-e).